The following is a 233-amino-acid chain: Octanoyltransferase (233 aa).

Positions 38-218 constitute a BPL/LPL catalytic domain; sequence AGGPDTLLLL…AVCDALDGVL (181 aa). A compositionally biased stretch (basic and acidic residues) spans 57 to 66; it reads RRTEPHERPL. The tract at residues 57-77 is disordered; that stretch reads RRTEPHERPLDGTPVVDTDRG. Residues 76 to 83, 148 to 150, and 161 to 163 each bind substrate; these read RGGKITWH, AIG, and GFA. The active-site Acyl-thioester intermediate is C179.

It belongs to the LipB family.

It localises to the cytoplasm. The catalysed reaction is octanoyl-[ACP] + L-lysyl-[protein] = N(6)-octanoyl-L-lysyl-[protein] + holo-[ACP] + H(+). It functions in the pathway protein modification; protein lipoylation via endogenous pathway; protein N(6)-(lipoyl)lysine from octanoyl-[acyl-carrier-protein]: step 1/2. Its function is as follows. Catalyzes the transfer of endogenously produced octanoic acid from octanoyl-acyl-carrier-protein onto the lipoyl domains of lipoate-dependent enzymes. Lipoyl-ACP can also act as a substrate although octanoyl-ACP is likely to be the physiological substrate. The chain is Octanoyltransferase from Mycolicibacterium paratuberculosis (strain ATCC BAA-968 / K-10) (Mycobacterium paratuberculosis).